The primary structure comprises 347 residues: GMP reductase (347 aa).

Position 108–131 (108–131) interacts with NADP(+); that stretch reads ADFEKTKQILDLNPALNFVCIDVA. K(+) contacts are provided by G181 and G183. Residue C186 is the Thioimidate intermediate of the active site. 216 to 239 provides a ligand contact to NADP(+); that stretch reads IISDGGCTTPGDVAKAFGGGADFV.

This sequence belongs to the IMPDH/GMPR family. GuaC type 1 subfamily. Homotetramer.

The enzyme catalyses IMP + NH4(+) + NADP(+) = GMP + NADPH + 2 H(+). Functionally, catalyzes the irreversible NADPH-dependent deamination of GMP to IMP. It functions in the conversion of nucleobase, nucleoside and nucleotide derivatives of G to A nucleotides, and in maintaining the intracellular balance of A and G nucleotides. The chain is GMP reductase from Escherichia coli O157:H7.